A 367-amino-acid polypeptide reads, in one-letter code: uncharacterized protein (367 aa).

The chain crosses the membrane as a helical span at residues 8–28 (VLIGTFVLAAILAVFGFIYWL).

It is found in the membrane. This is an uncharacterized protein from Bradyrhizobium diazoefficiens (strain JCM 10833 / BCRC 13528 / IAM 13628 / NBRC 14792 / USDA 110).